The sequence spans 296 residues: tRNA dimethylallyltransferase (296 aa).

Residue 9–16 (GPTAVGKT) coordinates ATP. Position 11–16 (11–16 (TAVGKT)) interacts with substrate. The interval 34-37 (DSRQ) is interaction with substrate tRNA.

Belongs to the IPP transferase family. In terms of assembly, monomer. Mg(2+) serves as cofactor.

The enzyme catalyses adenosine(37) in tRNA + dimethylallyl diphosphate = N(6)-dimethylallyladenosine(37) in tRNA + diphosphate. In terms of biological role, catalyzes the transfer of a dimethylallyl group onto the adenine at position 37 in tRNAs that read codons beginning with uridine, leading to the formation of N6-(dimethylallyl)adenosine (i(6)A). This is tRNA dimethylallyltransferase from Chloroflexus aurantiacus (strain ATCC 29366 / DSM 635 / J-10-fl).